A 380-amino-acid polypeptide reads, in one-letter code: tRNA-specific 2-thiouridylase MnmA (380 aa).

ATP is bound by residues 6-13 (ALSGGVDS) and M32. The active-site Nucleophile is the C101. C101 and C199 form a disulfide bridge. ATP is bound at residue G125. An interaction with tRNA region spans residues 148–150 (KDQ). C199 (cysteine persulfide intermediate) is an active-site residue.

Belongs to the MnmA/TRMU family.

The protein localises to the cytoplasm. The enzyme catalyses S-sulfanyl-L-cysteinyl-[protein] + uridine(34) in tRNA + AH2 + ATP = 2-thiouridine(34) in tRNA + L-cysteinyl-[protein] + A + AMP + diphosphate + H(+). Catalyzes the 2-thiolation of uridine at the wobble position (U34) of tRNA, leading to the formation of s(2)U34. In Beutenbergia cavernae (strain ATCC BAA-8 / DSM 12333 / CCUG 43141 / JCM 11478 / NBRC 16432 / NCIMB 13614 / HKI 0122), this protein is tRNA-specific 2-thiouridylase MnmA.